The sequence spans 61 residues: Photosystem II reaction center protein K (61 aa).

Residues 1-24 constitute a propeptide that is removed on maturation; the sequence is MLNIFCLICICLNSTLYSSSFFFA. A helical membrane pass occupies residues 32–52; it reads FFNPIIDVMPIIPVLFFLLAF.

This sequence belongs to the PsbK family. In terms of assembly, PSII is composed of 1 copy each of membrane proteins PsbA, PsbB, PsbC, PsbD, PsbE, PsbF, PsbH, PsbI, PsbJ, PsbK, PsbL, PsbM, PsbT, PsbX, PsbY, PsbZ, Psb30/Ycf12, at least 3 peripheral proteins of the oxygen-evolving complex and a large number of cofactors. It forms dimeric complexes.

The protein resides in the plastid. It localises to the chloroplast thylakoid membrane. One of the components of the core complex of photosystem II (PSII). PSII is a light-driven water:plastoquinone oxidoreductase that uses light energy to abstract electrons from H(2)O, generating O(2) and a proton gradient subsequently used for ATP formation. It consists of a core antenna complex that captures photons, and an electron transfer chain that converts photonic excitation into a charge separation. The chain is Photosystem II reaction center protein K from Phalaenopsis aphrodite subsp. formosana (Moth orchid).